Consider the following 337-residue polypeptide: ATP-dependent 6-phosphofructokinase (337 aa).

Position 11 (Gly11) interacts with ATP. 21–25 (RAVVR) serves as a coordination point for ADP. ATP-binding positions include 72-73 (RY) and 102-105 (GDGS). Asp103 lines the Mg(2+) pocket. 125 to 127 (TID) is a binding site for substrate. Asp127 acts as the Proton acceptor in catalysis. Arg154 contributes to the ADP binding site. Residues Arg162 and 169-171 (MGR) contribute to the substrate site. ADP contacts are provided by residues 185–187 (GAD), Lys212, and 214–216 (KNH). Substrate contacts are provided by residues Glu223, Arg245, and 251–254 (HILR).

This sequence belongs to the phosphofructokinase type A (PFKA) family. ATP-dependent PFK group I subfamily. Prokaryotic clade 'B1' sub-subfamily. In terms of assembly, homotetramer. Mg(2+) is required as a cofactor.

The protein localises to the cytoplasm. The enzyme catalyses beta-D-fructose 6-phosphate + ATP = beta-D-fructose 1,6-bisphosphate + ADP + H(+). It participates in carbohydrate degradation; glycolysis; D-glyceraldehyde 3-phosphate and glycerone phosphate from D-glucose: step 3/4. Allosterically activated by ADP and other diphosphonucleosides, and allosterically inhibited by phosphoenolpyruvate. Functionally, catalyzes the phosphorylation of D-fructose 6-phosphate to fructose 1,6-bisphosphate by ATP, the first committing step of glycolysis. This chain is ATP-dependent 6-phosphofructokinase, found in Streptococcus pyogenes serotype M4 (strain MGAS10750).